Reading from the N-terminus, the 585-residue chain is Protein DENND6B (585 aa).

Low complexity predominate over residues 1-10 (MEVPVGPGPR). Residues 1–25 (MEVPVGPGPRQAGGGLGATRSSSSG) form a disordered region. Positions 43–221 (ECVCVVTFDL…IQVRIPSRVD (179 aa)) constitute a uDENN domain. A cDENN domain is found at 246 to 373 (VHELDLFRCF…VKLKKPSRLK (128 aa)). The dDENN domain maps to 375–499 (LDTKPGLYTS…KSPHFDGWYR (125 aa)).

This sequence belongs to the DENND6 family.

It is found in the recycling endosome. It localises to the cytoplasm. Functionally, guanine nucleotide exchange factor (GEF) for RAB14. Also has some, lesser GEF activity towards RAB35. The chain is Protein DENND6B (Dennd6b) from Mus musculus (Mouse).